The following is a 568-amino-acid chain: CTP synthase (568 aa).

Residues 1–276 (MPQARTIKHV…DAYLVRRLGL (276 aa)) form an amidoligase domain region. Position 18 (serine 18) interacts with CTP. Serine 18 lines the UTP pocket. Residues 19 to 24 (SLGKGL) and aspartate 76 each bind ATP. Mg(2+)-binding residues include aspartate 76 and glutamate 150. CTP is bound by residues 157–159 (DIE), 197–202 (KTKPTQ), and lysine 233. UTP-binding positions include 197–202 (KTKPTQ) and lysine 233. Positions 301 to 550 (RIALVGKYVD…VNAALEYRAA (250 aa)) constitute a Glutamine amidotransferase type-1 domain. Glycine 364 provides a ligand contact to L-glutamine. Cysteine 391 functions as the Nucleophile; for glutamine hydrolysis in the catalytic mechanism. L-glutamine-binding positions include 392–395 (LGLQ), glutamate 415, and arginine 476. Catalysis depends on residues histidine 523 and glutamate 525.

This sequence belongs to the CTP synthase family. Homotetramer.

The catalysed reaction is UTP + L-glutamine + ATP + H2O = CTP + L-glutamate + ADP + phosphate + 2 H(+). It catalyses the reaction L-glutamine + H2O = L-glutamate + NH4(+). It carries out the reaction UTP + NH4(+) + ATP = CTP + ADP + phosphate + 2 H(+). It functions in the pathway pyrimidine metabolism; CTP biosynthesis via de novo pathway; CTP from UDP: step 2/2. With respect to regulation, allosterically activated by GTP, when glutamine is the substrate; GTP has no effect on the reaction when ammonia is the substrate. The allosteric effector GTP functions by stabilizing the protein conformation that binds the tetrahedral intermediate(s) formed during glutamine hydrolysis. Inhibited by the product CTP, via allosteric rather than competitive inhibition. Functionally, catalyzes the ATP-dependent amination of UTP to CTP with either L-glutamine or ammonia as the source of nitrogen. Regulates intracellular CTP levels through interactions with the four ribonucleotide triphosphates. This Saccharopolyspora erythraea (strain ATCC 11635 / DSM 40517 / JCM 4748 / NBRC 13426 / NCIMB 8594 / NRRL 2338) protein is CTP synthase.